We begin with the raw amino-acid sequence, 108 residues long: uncharacterized protein (108 aa).

Positions 1 to 12 (MSNQQKQLQLPS) are enriched in polar residues. Positions 1-22 (MSNQQKQLQLPSASIKKPKEKQ) are disordered.

This is an uncharacterized protein from Dictyostelium discoideum (Social amoeba).